A 217-amino-acid polypeptide reads, in one-letter code: Probable GTP-binding protein EngB (217 aa).

The EngB-type G domain maps to 44-217 (DRIEVCFAGR…TLRTIVATLG (174 aa)). GTP is bound by residues 52–59 (GRSNVGKS), 79–83 (GRTQE), 97–100 (DLPG), 164–167 (TKAD), and 198–200 (TSS). Mg(2+) contacts are provided by Ser-59 and Thr-81.

The protein belongs to the TRAFAC class TrmE-Era-EngA-EngB-Septin-like GTPase superfamily. EngB GTPase family. The cofactor is Mg(2+).

In terms of biological role, necessary for normal cell division and for the maintenance of normal septation. This is Probable GTP-binding protein EngB from Cereibacter sphaeroides (strain ATCC 17023 / DSM 158 / JCM 6121 / CCUG 31486 / LMG 2827 / NBRC 12203 / NCIMB 8253 / ATH 2.4.1.) (Rhodobacter sphaeroides).